Consider the following 360-residue polypeptide: Decorin (360 aa).

The signal sequence occupies residues methionine 1–alanine 16. Positions glycine 17–glutamate 30 are excised as a propeptide. A glycan (O-linked (Xyl...) (glycosaminoglycan) serine) is linked at serine 34. 2 cysteine pairs are disulfide-bonded: cysteine 55-cysteine 61 and cysteine 59-cysteine 68. LRR repeat units follow at residues aspartate 74–isoleucine 94, threonine 95–isoleucine 118, serine 119–leucine 142, lysine 143–isoleucine 163, threonine 164–leucine 187, lysine 188–isoleucine 213, threonine 214–isoleucine 234, threonine 235–isoleucine 258, serine 259–leucine 282, isoleucine 283–isoleucine 305, serine 306–valine 335, and glutamine 336–lysine 360. A glycan (N-linked (GlcNAc...) asparagine) is linked at asparagine 212. Asparagine 263 and asparagine 304 each carry an N-linked (GlcNAc...) asparagine glycan. Cysteine 314 and cysteine 347 are joined by a disulfide.

The protein belongs to the small leucine-rich proteoglycan (SLRP) family. SLRP class I subfamily. As to quaternary structure, binds to type I and type II collagen, fibronectin and TGF-beta. Forms a ternary complex with MFAP2 and ELN. Interacts with DPT. The attached glycosaminoglycan chain can be either chondroitin sulfate or dermatan sulfate depending upon the tissue of origin.

Its subcellular location is the secreted. It localises to the extracellular space. It is found in the extracellular matrix. Functionally, may affect the rate of fibrils formation. The polypeptide is Decorin (DCN) (Oryctolagus cuniculus (Rabbit)).